Reading from the N-terminus, the 143-residue chain is Large ribosomal subunit protein uL13 (143 aa).

It belongs to the universal ribosomal protein uL13 family. Part of the 50S ribosomal subunit.

Its function is as follows. This protein is one of the early assembly proteins of the 50S ribosomal subunit, although it is not seen to bind rRNA by itself. It is important during the early stages of 50S assembly. This chain is Large ribosomal subunit protein uL13, found in Dehalococcoides mccartyi (strain ATCC BAA-2266 / KCTC 15142 / 195) (Dehalococcoides ethenogenes (strain 195)).